A 54-amino-acid polypeptide reads, in one-letter code: SPbeta prophage-derived uncharacterized protein YoqE (54 aa).

This chain is SPbeta prophage-derived uncharacterized protein YoqE (yoqE), found in Bacillus subtilis (strain 168).